The primary structure comprises 314 residues: Nodulation protein D 1 (314 aa).

Positions 6–63 (LDLNLLVVLDALLTERTLTAAASSINLSQPAMSAAVARLRDYFNDELFTTSGRERVLT) constitute an HTH lysR-type domain. A DNA-binding region (H-T-H motif) is located at residues 23–42 (LTAAASSINLSQPAMSAAVA).

Belongs to the LysR transcriptional regulatory family.

In terms of biological role, nodD regulates the expression of the nodABCFE genes which encode other nodulation proteins. NodD is also a negative regulator of its own expression. Binds flavenoids as inducers. This chain is Nodulation protein D 1 (nodD1), found in Mesorhizobium japonicum (strain LMG 29417 / CECT 9101 / MAFF 303099) (Mesorhizobium loti (strain MAFF 303099)).